We begin with the raw amino-acid sequence, 133 residues long: ATP synthase epsilon chain, chloroplastic (133 aa).

It belongs to the ATPase epsilon chain family. In terms of assembly, F-type ATPases have 2 components, CF(1) - the catalytic core - and CF(0) - the membrane proton channel. CF(1) has five subunits: alpha(3), beta(3), gamma(1), delta(1), epsilon(1). CF(0) has three main subunits: a, b and c.

It localises to the plastid. The protein resides in the chloroplast thylakoid membrane. Produces ATP from ADP in the presence of a proton gradient across the membrane. The protein is ATP synthase epsilon chain, chloroplastic of Atropa belladonna (Belladonna).